Here is a 274-residue protein sequence, read N- to C-terminus: 16S rRNA (guanine(1405)-N(7))-methyltransferase (274 aa).

Residues Phe-64, 102 to 104 (HVS), Arg-108, Ala-133, Asp-156, 182 to 183 (DL), Leu-198, and Gln-207 each bind S-adenosyl-L-methionine.

This sequence belongs to the methyltransferase superfamily. Aminoglycoside resistance family.

It carries out the reaction guanosine(1405) in 16S rRNA + S-adenosyl-L-methionine = N(7)-methylguanosine(1405) in 16S rRNA + S-adenosyl-L-homocysteine. Specifically methylates the N(7) position of guanine 1405 in 16S rRNA. Confers resistance to various aminoglycosides, including gentamicin and kanamycin. This chain is 16S rRNA (guanine(1405)-N(7))-methyltransferase (grm), found in Micromonospora echinospora (Micromonospora purpurea).